Here is a 95-residue protein sequence, read N- to C-terminus: Protein GOLVEN 9 (95 aa).

An N-terminal signal peptide occupies residues 1 to 24 (MKKTSLKLMTLVLGFCFVIYLLQG). Residues 25 to 73 (PRGGSRNGDLLIARKLISLEPIETKNAARSLKDSISTDLEEEVDRLMEH) constitute a propeptide that is removed on maturation. The segment at 72–95 (EHEYPSPVKPRKRTPVHNGVRNRH) is disordered. At Tyr-75 the chain carries Sulfotyrosine. Positions 80 to 95 (KPRKRTPVHNGVRNRH) are enriched in basic residues. A Hydroxyproline modification is found at Pro-86. Residues 90–95 (GVRNRH) constitute a propeptide that is removed on maturation.

The protein belongs to the RGF family. In terms of assembly, binds to LRR receptor-like serine/threonine-protein kinases to trigger their dimerization with SERK proteins and subsequent signaling. As to expression, expressed in roots.

The protein resides in the secreted. In terms of biological role, signaling peptide (root growth factor) required during root gravitropism in a PIN2-traffic dependent manner. Regulates the pattern of root growth and lateral root development by modulating the length and the number of cortical cells in the root apical meristem (RAM), and the anticlinal asymmetric cell divisions in lateral root initiation cells. This chain is Protein GOLVEN 9, found in Arabidopsis thaliana (Mouse-ear cress).